A 288-amino-acid polypeptide reads, in one-letter code: 33 kDa chaperonin (288 aa).

2 disulfide bridges follow: Cys235-Cys237 and Cys268-Cys271.

It belongs to the HSP33 family. Under oxidizing conditions two disulfide bonds are formed involving the reactive cysteines. Under reducing conditions zinc is bound to the reactive cysteines and the protein is inactive.

It is found in the cytoplasm. Functionally, redox regulated molecular chaperone. Protects both thermally unfolding and oxidatively damaged proteins from irreversible aggregation. Plays an important role in the bacterial defense system toward oxidative stress. This chain is 33 kDa chaperonin, found in Streptococcus thermophilus (strain ATCC BAA-491 / LMD-9).